A 367-amino-acid chain; its full sequence is 2-aminoethylphosphonate--pyruvate transaminase (367 aa).

The residue at position 194 (Lys194) is an N6-(pyridoxal phosphate)lysine.

The protein belongs to the class-V pyridoxal-phosphate-dependent aminotransferase family. PhnW subfamily. Homodimer. Requires pyridoxal 5'-phosphate as cofactor.

The catalysed reaction is (2-aminoethyl)phosphonate + pyruvate = phosphonoacetaldehyde + L-alanine. In terms of biological role, involved in phosphonate degradation. The chain is 2-aminoethylphosphonate--pyruvate transaminase from Salmonella gallinarum (strain 287/91 / NCTC 13346).